Here is a 475-residue protein sequence, read N- to C-terminus: ATP synthase subunit beta, chloroplastic (475 aa).

ATP is bound at residue 155-162; that stretch reads GGAGVGKT.

Belongs to the ATPase alpha/beta chains family. As to quaternary structure, F-type ATPases have 2 components, CF(1) - the catalytic core - and CF(0) - the membrane proton channel. CF(1) has five subunits: alpha(3), beta(3), gamma(1), delta(1), epsilon(1). CF(0) has four main subunits: a(1), b(1), b'(1) and c(9-12).

It is found in the plastid. The protein resides in the chloroplast thylakoid membrane. It carries out the reaction ATP + H2O + 4 H(+)(in) = ADP + phosphate + 5 H(+)(out). Produces ATP from ADP in the presence of a proton gradient across the membrane. The catalytic sites are hosted primarily by the beta subunits. The polypeptide is ATP synthase subunit beta, chloroplastic (Porphyra purpurea (Red seaweed)).